Reading from the N-terminus, the 1583-residue chain is Dynamin-binding protein (1583 aa).

Met1 carries the N-acetylmethionine modification. 4 SH3 domains span residues 2–61, 66–126, 145–204, and 243–302; these read EAGS…IVTI, EGER…ELCL, YSMG…LLGP, and QPGT…LFSK. Disordered regions lie at residues 217-244, 306-329, and 366-464; these read HNDC…EEQP, EETM…DCRE, and ECEV…RGMY. Residues 224-243 show a composition bias toward acidic residues; the sequence is GEEETPTGEEERGPEEDEEQ. Basic and acidic residues predominate over residues 366–379; that stretch reads ECEVHKSSHQDEGT. Residues 406 to 442 are compositionally biased toward polar residues; that stretch reads ETINGVSSQSQVPFRPRWQQNQYYSTTGRGHLSTEQY. Ser495 carries the phosphoserine modification. Disordered stretches follow at residues 594–656 and 671–693; these read RGSS…PSAQ and LFTH…QTLD. The segment covering 637 to 653 has biased composition (pro residues); that stretch reads PEPPLAMRPSRPAPLPP. The segment covering 675–685 has biased composition (basic and acidic residues); the sequence is ESCESPEKEGP. Positions 742–762 form a coiled coil; the sequence is LEFYESNIESLNMELQQLREM. One can recognise a DH domain in the interval 791 to 974; it reads KRAKVIEELL…KEINVNINEY (184 aa). One can recognise a BAR domain in the interval 1015–1224; sequence LKHLTGFAPQ…LKVAGREGNL (210 aa). Residues 1292–1355 enclose the SH3 5 domain; that stretch reads PPEKLFQAER…YSSFLKPYNT (64 aa). Residues 1357–1496 form a disordered region; it reads RSHSDVSVGS…GRNGQGKDLT (140 aa). Over residues 1361-1387 the composition is skewed to low complexity; sequence DVSVGSHSSTESEQSSSSPRFPRQNSS. The span at 1388 to 1414 shows a compositional bias: polar residues; the sequence is GTLTFNPGSMAVSFTSGSCQKQPQDAT. The span at 1433–1456 shows a compositional bias: low complexity; sequence SESSPSRCPSDPDSSPQPRSWDSP. The region spanning 1519–1582 is the SH3 6 domain; the sequence is EGNQVYFAVY…PSNYIRKAEY (64 aa).

Binds DNM1 via its N-terminal SH3 domains. The C-terminal SH3 domain binds a complex containing actin, tubulin, Hsp70 and actin-regulatory proteins, such as ENAH, EVL, WIRE, CR16, WAVE1 and NAP1L1. Interacts with FASLG. Interacts (via SH3 domain 6) with WASL. Interacts (via SH3 domain 6) interacts with ENAH. Interacts (via C-terminal domain) with TJP1; required for the apical cell-cell junction localization of DNMBP.

It localises to the cytoplasm. Its subcellular location is the golgi apparatus. It is found in the golgi stack. The protein localises to the cytoskeleton. The protein resides in the synapse. It localises to the cell junction. Its function is as follows. Plays a critical role as a guanine nucleotide exchange factor (GEF) for CDC42 in several intracellular processes associated with the actin and microtubule cytoskeleton. Regulates the structure of apical junctions in epithelial cells. Participates in the normal lumenogenesis of epithelial cell cysts by regulating spindle orientation. Plays a key role in ciliogenesis and cyst formation. May play a role in membrane trafficking between the cell surface and the Golgi. The sequence is that of Dynamin-binding protein from Canis lupus familiaris (Dog).